The following is a 374-amino-acid chain: MGELGALQSIVYHRGSLRLLDQRKLPLEVDYIDVKCSGDGWNAIRDMVVRGAPAIAIAAALALAVEVSGLEDFTGTPAEAAAFVSEKLEYLVSSRPTAVNLSDAATKLRSLVSRTAETEKDAKAIFQAYIDAAETMLVDDVSDNKAIGSHGAEFLKQKLEVSKDISVLTHCNTGSLATAGYGTALGVIRALHSGGILEKAFCTETRPFNQGSRLTAFELVHDKVPATLIADSAAAALMKSGCIQAVIVGADRIAANGDTANKIGTYNLAISAKHHGVQFYVAAPITSIDLSLPSGEQIVIEERSPNELLNSEGGLGKQVAASGISVWNPAFDVTPANLITAIITEKGVITKSDADETFNIKDFIQSAKLYSTMQ.

Asp-251 (proton donor) is an active-site residue.

The protein belongs to the eIF-2B alpha/beta/delta subunits family. MtnA subfamily.

It is found in the cytoplasm. Its subcellular location is the nucleus. The catalysed reaction is 5-(methylsulfanyl)-alpha-D-ribose 1-phosphate = 5-(methylsulfanyl)-D-ribulose 1-phosphate. The protein operates within amino-acid biosynthesis; L-methionine biosynthesis via salvage pathway; L-methionine from S-methyl-5-thio-alpha-D-ribose 1-phosphate: step 1/6. In terms of biological role, catalyzes the interconversion of methylthioribose-1-phosphate (MTR-1-P) into methylthioribulose-1-phosphate (MTRu-1-P). This chain is Methylthioribose-1-phosphate isomerase, found in Oryza sativa subsp. indica (Rice).